The sequence spans 148 residues: NADPH-dependent 7-cyano-7-deazaguanine reductase (148 aa).

Cysteine 50 (thioimide intermediate) is an active-site residue. The active-site Proton donor is the aspartate 57. Residues 72–74 (VES) and 91–92 (HE) each bind substrate.

The protein belongs to the GTP cyclohydrolase I family. QueF type 1 subfamily.

The protein localises to the cytoplasm. The enzyme catalyses 7-aminomethyl-7-carbaguanine + 2 NADP(+) = 7-cyano-7-deazaguanine + 2 NADPH + 3 H(+). The protein operates within tRNA modification; tRNA-queuosine biosynthesis. Its function is as follows. Catalyzes the NADPH-dependent reduction of 7-cyano-7-deazaguanine (preQ0) to 7-aminomethyl-7-deazaguanine (preQ1). In Helicobacter pylori (strain HPAG1), this protein is NADPH-dependent 7-cyano-7-deazaguanine reductase.